The sequence spans 93 residues: Large ribosomal subunit protein eL42 (93 aa).

Zn(2+)-binding residues include cysteine 11 and cysteine 14. The C4-type zinc-finger motif lies at 11–75; sequence CPNCDEHHQL…TDLKYRCSEC (65 aa). Residues 24–62 are disordered; that stretch reads KVRSGRSSGMKWDARRTKRANASIGNHGRFSKVPVGNKP. Residues cysteine 72 and cysteine 75 each coordinate Zn(2+).

This sequence belongs to the eukaryotic ribosomal protein eL42 family. Part of the 50S ribosomal subunit. Zn(2+) serves as cofactor.

Functionally, binds to the 23S rRNA. The protein is Large ribosomal subunit protein eL42 of Halobacterium salinarum (strain ATCC 700922 / JCM 11081 / NRC-1) (Halobacterium halobium).